We begin with the raw amino-acid sequence, 1867 residues long: MTSRVSRLDRQVILIETGSTQVVRNMAADQMGDLAKQHPEDILSLLSRVYPFLLVKKWETRVTAARAVGGIVAHAPSWDPNESDLVGGTNEGSPLDNAQVKLEHEMKIKLEEATQNNQLNLLQEDHHLSSLSDWKLNEILKSGKVLLASSMNDYNVLGKADDNIRKQAKTDDIKQETSMLNASDKANENKSNANKKSARMLAMARRKKKMSAKNTPKHPVDITESSVSKTLLNGKNMTNSAASLATSPTSNQLNPKLEITEQADESKLMIESTVRPLLEQHEIVAGLVWQFQGIYELLLDNLMSENWEIRHGAALGLRELVKKHAYGVSRVKGNTREENNLRNSRSLEDLASRLLTVFALDRFGDYVYDTVVAPVRESVAQTLAALLIHLDSTLSIKIFNCLEQLVLQDPLQTGLPNKIWEATHGGLLGIRYFVSIKTNFLFAHGLLENVVRIVLYGLNQSDDDVQSVAASILTPITSEFVKLNNSTIEILVTTIWSLLARLDDDISSSVGSIMDLLAKLCDHQEVLDILKNKALEHPSEWSFKSLVPKLYPFLRHSISSVRRAVLNLLIAFLSIKDDSTKNWLNGKVFRLVFQNILLEQNPELLQLSFDVYVALLEHYKVKHTEKTLDHVFSKHLQPILHLLNTPVGEKGKNYAMESQYILKPSQHYQLHPEKKRSISETTTDSDIPIPKNNEHINIDAPMIAGDITLLGLDVILNTRIMGAKAFALTLSMFQDSTLQSFFTNVLVRCLELPFSTPRMLAGIIVSQFCSSWLQKHPEGEKLPSFVSEIFSPVMNKQLLNRDEFPVFRELVPSLKALRTQCQSLLATFVDVGMLPQYKLPNVAIVVQGETEAGPHAFGVETAEKVYGEYYDKMFKSMNNSYKLLAKKPLEDSKHRVLMAINSAKESAKLRTGSILANYASSILLFDGLPLKLNPIIRSLMDSVKEERNEKLQTMAGESVVHLIQQLLENNKVNVSGKIVKNLCGFLCVDTSEVPDFSVNAEYKEKILTLIKESNSIAAQDDINLAKMSEEAQLKRKGGLITLKILFEVLGPSILQKLPQLRSILFDSLSDHENEEASKVDNEQGQKIVDSFGVLRALFPFMSDSLRSSEVFTRFPVLLTFLRSNLSVFRYSAARTFADLAKISSVEVMAYTIREILPLMNSAGSLSDRQGSTELIYHLSLSMETDVLPYVIFLIVPLLGRMSDSNEDVRNLATTTFASIIKLVPLEAGIADPKGLPEELVASRERERDFIQQMMDPSKAKPFKLPIAIKATLRKYQQDGVNWLAFLNKYHLHGILCDDMGLGKTLQTICIIASDQYLRKEDYEKTRSVESRALPSLIICPPSLTGHWENEFDQYAPFLKVVVYAGGPTVRLTLRPQLSDADIIVTSYDVARNDLAVLNKTEYNYCVLDEGHIIKNSQSKLAKAVKEITANHRLILTGTPIQNNVLELWSLFDFLMPGFLGTEKMFQERFAKPIAASRNSKTSSKEQEAGVLALEALHKQVLPFMLRRLKEDVLSDLPPKIIQDYYCELGDLQKQLYMDFTKKQKNVVEKDIENSEIADGKQHIFQALQYMRKLCNHPALVLSPNHPQLAQVQDYLKQTGLDLHDIINAPKLSALRTLLFECGIGEEDIDKKASQDQNFPIQNVISQHRALIFCQLKDMLDMVENDLFKKYMPSVTYMRLDGSIDPRDRQKVVRKFNEDPSIDCLLLTTKVGGLGLNLTGADTVIFVEHDWNPMNDLQAMDRAHRIGQKKVVNVYRIITKGTLEEKIMGLQKFKMNIASTVVNQQNSGLASMDTHQLLDLFDPDNVTSQDNEEKNNGDSQAAKGMEDIANETGLTGKAKEALGELKELWDPSQYEEEYNLDTFIKTLR.

Ser93 bears the Phosphoserine mark. The disordered stretch occupies residues 169 to 228 (KTDDIKQETSMLNASDKANENKSNANKKSARMLAMARRKKKMSAKNTPKHPVDITESSVS). The segment covering 181 to 203 (NASDKANENKSNANKKSARMLAM) has biased composition (low complexity). The short motif at 195–211 (KKSARMLAMARRKKKMS) is the Nuclear localization signal element. HEAT repeat units lie at residues 289–326 (WQFQGIYELLLDNLMSENWEIRHGAALGLRELVKKHAY), 445–482 (GLLENVVRIVLYGLNQSDDDVQSVAASILTPITSEFVK), and 541–578 (WSFKSLVPKLYPFLRHSISSVRRAVLNLLIAFLSIKDD). Ser677 carries the post-translational modification Phosphoserine. HEAT repeat units follow at residues 1108–1145 (SEVFTRFPVLLTFLRSNLSVFRYSAARTFADLAKISSV) and 1188–1225 (PYVIFLIVPLLGRMSDSNEDVRNLATTTFASIIKLVPL). In terms of domain architecture, Helicase ATP-binding spans 1284–1457 (AFLNKYHLHG…WSLFDFLMPG (174 aa)). 1297-1304 (DDMGLGKT) lines the ATP pocket. The DEGH box signature appears at 1408 to 1411 (DEGH). The HEAT 6 repeat unit spans residues 1495-1537 (ALHKQVLPFMLRRLKEDVLSDLPPKIIQDYYCELGDLQKQLYM). The Helicase C-terminal domain maps to 1639–1787 (PIQNVISQHR…STVVNQQNSG (149 aa)). A disordered region spans residues 1802-1822 (PDNVTSQDNEEKNNGDSQAAK).

It belongs to the SNF2/RAD54 helicase family. As to quaternary structure, forms a complex with TBP which binds TATA DNA with high affinity but with altered specificity.

It is found in the mitochondrion. It localises to the nucleus. Regulates transcription in association with TATA binding protein (TBP). Removes TBP from the TATA box via its C-terminal ATPase activity. Both transcription activation and repression require its ATPase activity. The sequence is that of TATA-binding protein-associated factor MOT1 (MOT1) from Saccharomyces cerevisiae (strain ATCC 204508 / S288c) (Baker's yeast).